Reading from the N-terminus, the 295-residue chain is Small ribosomal subunit protein uS2 (295 aa).

Ser2 carries the post-translational modification N-acetylserine. Ser43 carries the post-translational modification Phosphoserine. Lys52 bears the N6-acetyllysine mark. Residues 54–113 (TWEKLLLAARAIVAIENPADVSVISSRNTGQRAVLKFAAATGATPIAGRFTPGTFTNQIQ) form an interaction with PPP1R16B region. Lys89 carries the post-translational modification N6-acetyllysine; alternate. Residue Lys89 forms a Glycyl lysine isopeptide (Lys-Gly) (interchain with G-Cter in SUMO2); alternate linkage. A Phosphothreonine modification is found at Thr97. Laminin-binding stretches follow at residues 161–180 (IPCN…MLAR) and 205–229 (RDPE…EFQG). [DE]-W-[ST] repeat units follow at residues 230 to 232 (EWT), 247 to 249 (DWS), 266 to 268 (DWS), 275 to 277 (DWS), and 293 to 295 (EWS). The segment at 242–295 (QPEVADWSEGVQVPSVPIQQFPTEDWSAQPTTEDWSAAPTAQATEWVGTTTEWS) is laminin-binding. A disordered region spans residues 266 to 295 (DWSAQPTTEDWSAAPTAQATEWVGTTTEWS).

The protein belongs to the universal ribosomal protein uS2 family. As to quaternary structure, monomer (37LRP) and homodimer (67LR). Component of the small ribosomal subunit. Mature ribosomes consist of a small (40S) and a large (60S) subunit. The 40S subunit contains about 33 different proteins and 1 molecule of RNA (18S). The 60S subunit contains about 49 different proteins and 3 molecules of RNA (28S, 5.8S and 5S). Interacts with RPS21. Interacts with several laminins including at least LAMB1. Interacts with MDK. The mature dimeric form interacts with PPP1R16B (via its fourth ankyrin repeat). Interacts with PPP1CA only in the presence of PPP1R16B. Acylated. Acylation may be a prerequisite for conversion of the monomeric 37 kDa laminin receptor precursor (37LRP) to the mature dimeric 67 kDa laminin receptor (67LR), and may provide a mechanism for membrane association. Post-translationally, cleaved by stromelysin-3 (ST3) at the cell surface. Cleavage by stromelysin-3 may be a mechanism to alter cell-extracellular matrix interactions.

It is found in the cell membrane. The protein localises to the cytoplasm. Its subcellular location is the nucleus. Functionally, required for the assembly and/or stability of the 40S ribosomal subunit. Required for the processing of the 20S rRNA-precursor to mature 18S rRNA in a late step of the maturation of 40S ribosomal subunits. Also functions as a cell surface receptor for laminin. Plays a role in cell adhesion to the basement membrane and in the consequent activation of signaling transduction pathways. May play a role in cell fate determination and tissue morphogenesis. Also acts as a receptor for several other ligands, including the pathogenic prion protein, viruses, and bacteria. Acts as a PPP1R16B-dependent substrate of PPP1CA. In Sus scrofa (Pig), this protein is Small ribosomal subunit protein uS2.